The primary structure comprises 601 residues: Sulfite reductase [NADPH] flavoprotein alpha-component (601 aa).

In terms of domain architecture, Flavodoxin-like spans 64–202; it reads ITLISASQTG…SAQQWRQQIV (139 aa). Residues 70–75, 117–120, and 153–162 each bind FMN; these read SQTGNA, STQG, and LGDTSYEHFC. The FAD-binding FR-type domain maps to 236 to 450; that stretch reads AAPLTAQLSV…IEHNDNFRLP (215 aa). FAD is bound by residues threonine 324, lysine 358, 388 to 391, 406 to 408, tyrosine 412, and 421 to 424; these read RLYS, TVG, and GGAS. Residues 521–522, 527–531, and aspartate 563 each bind NADP(+); these read SR and KIYVQ. Residue tyrosine 601 coordinates FAD.

This sequence belongs to the NADPH-dependent sulphite reductase flavoprotein subunit CysJ family. The protein in the N-terminal section; belongs to the flavodoxin family. In the C-terminal section; belongs to the flavoprotein pyridine nucleotide cytochrome reductase family. Alpha(8)-beta(8). The alpha component is a flavoprotein, the beta component is a hemoprotein. It depends on FAD as a cofactor. The cofactor is FMN.

It carries out the reaction hydrogen sulfide + 3 NADP(+) + 3 H2O = sulfite + 3 NADPH + 4 H(+). The protein operates within sulfur metabolism; hydrogen sulfide biosynthesis; hydrogen sulfide from sulfite (NADPH route): step 1/1. Its function is as follows. Component of the sulfite reductase complex that catalyzes the 6-electron reduction of sulfite to sulfide. This is one of several activities required for the biosynthesis of L-cysteine from sulfate. The flavoprotein component catalyzes the electron flow from NADPH -&gt; FAD -&gt; FMN to the hemoprotein component. The chain is Sulfite reductase [NADPH] flavoprotein alpha-component from Yersinia enterocolitica serotype O:8 / biotype 1B (strain NCTC 13174 / 8081).